Consider the following 428-residue polypeptide: Putative UPF0496 protein 5 (428 aa).

Basic residues predominate over residues 1-14 (MGNRHGIMRPRRLA). Residues 1–40 (MGNRHGIMRPRRLASGRSAAAAEEEGEDGEGEPGSYEAAC) form a disordered region. Over residues 22–31 (AEEEGEDGEG) the composition is skewed to acidic residues. Helical transmembrane passes span 229 to 249 (IVFL…AAIA) and 252 to 272 (PVAA…GKWM).

This sequence belongs to the UPF0496 family.

The protein resides in the membrane. The sequence is that of Putative UPF0496 protein 5 from Oryza sativa subsp. indica (Rice).